The sequence spans 424 residues: Inhibin beta A chain (424 aa).

Positions 1-20 are cleaved as a signal peptide; that stretch reads MPLLWLRGFLLASCWIIVRS. Residues 21–308 constitute a propeptide that is removed on maturation; sequence SPTPGSEGHG…EDHPHRRRRR (288 aa). Residue N165 is glycosylated (N-linked (GlcNAc...) asparagine). Basic and acidic residues predominate over residues 264–275; sequence EVDGDGKKKDGS. Residues 264-306 are disordered; that stretch reads EVDGDGKKKDGSDGGLEEEKEQSHRPFLMLQARQSEDHPHRRR. 4 cysteine pairs are disulfide-bonded: C312–C320, C319–C389, C348–C421, and C352–C423.

The protein belongs to the TGF-beta family. As to quaternary structure, dimeric, linked by one or more disulfide bonds. Inhibin A is a dimer of alpha/INHA and beta-A/INHBA. Activin A is a homodimer of beta-A/INHBA. Activin AB is a dimer of beta-A/INHBA and beta-B/INHBB. Interacts with FST and FSTL3; these interactions prevent activin A interaction to its type II receptor. Activin A interacts with ACVR2A. Activin A interacts with BMPR2. Inhibin A interacts with ACVR1; this interaction creates a non-signaling complex (NSC) that inhibits ACVR1-mediated BMP signaling. Inhibin A interacts with ACVR2A. In terms of tissue distribution, uterus, ovary and liver.

It is found in the secreted. Inhibins/activins are involved in regulating a number of diverse functions such as hypothalamic and pituitary hormone secretion, gonadal hormone secretion, germ cell development and maturation, erythroid differentiation, insulin secretion, nerve cell survival, embryonic axial development or bone growth, depending on their subunit composition. Functionally, activin A is a homodimer of INHBA that plays a role in several essential biological processes including embryonic development, stem cell maintenance and differentiation, haematopoiesis, cell proliferation and tissue fibrosis. Signals through type I (such as ACVR1B or ACVR1C) and type II receptors (such as ACVR2A, ACVR2B or BMPR2) which, upon ligand binding, phosphorylate SMAD2 and SMAD3 intracellular signaling mediators that form a complex with SMAD4, translocate to the nucleus and modulate gene expression. Can also activate alternative non-canonical intracellular signaling pathways including the p38 MAPK, extracellular signal-regulated kinases 1/2 (ERK1/2) and c-Jun N-terminal kinases (JNKs) to modulate cell migration and differentiation. Alternatively, promotes osteoblastic differentiation via ACVRL1-SMAD1/5/9 pathway. In addition, can engage the type I receptor ACVR1 to form an ACVR1-activin A-type II receptor non-signaling complex (NSC) that renders receptors unavailable for engagement with BMPs, hence resulting in an apparent inhibition of ACVR1-mediated BMP signaling. In terms of biological role, inhibin A is a dimer of alpha/INHA and beta-A/INHBA that functions as a feedback regulator in the hypothalamic-pituitary-gonadal (HPG) axis. Inhibits the secretion of FSH from the anterior pituitary gland by acting on pituitary gonadotrope cells. Antagonizes activin A by binding to the proteoglycan, betaglycan, and forming a stable complex with and, thereby, sequestering type II activin receptors while excluding type I receptor. This Mus musculus (Mouse) protein is Inhibin beta A chain (Inhba).